Consider the following 147-residue polypeptide: MFRGNHPTRIDDKGRLKVPADFKREIEDKFQNQTFYVTSFNGKEARLYPMEEWERFEAKLAALPSLNPTRQKLLNVSNYYGQVVEMDGQGRVTIPGLLREAAEIKGEVAVMGFLQYLVVRNAEHLKNEIESAPFTAEDEKTLSDLGI.

SpoVT-AbrB domains are found at residues 5–52 (NHPT…PMEE) and 81–124 (GQVV…NAEH).

Belongs to the MraZ family. In terms of assembly, forms oligomers.

The protein resides in the cytoplasm. It is found in the nucleoid. This chain is Transcriptional regulator MraZ, found in Koribacter versatilis (strain Ellin345).